The following is a 745-amino-acid chain: 1,4-alpha-glucan branching enzyme GlgB (745 aa).

The active-site Nucleophile is aspartate 416. Glutamate 469 (proton donor) is an active-site residue.

The protein belongs to the glycosyl hydrolase 13 family. GlgB subfamily. In terms of assembly, monomer.

It catalyses the reaction Transfers a segment of a (1-&gt;4)-alpha-D-glucan chain to a primary hydroxy group in a similar glucan chain.. It functions in the pathway glycan biosynthesis; glycogen biosynthesis. In terms of biological role, catalyzes the formation of the alpha-1,6-glucosidic linkages in glycogen by scission of a 1,4-alpha-linked oligosaccharide from growing alpha-1,4-glucan chains and the subsequent attachment of the oligosaccharide to the alpha-1,6 position. In Shewanella sp. (strain W3-18-1), this protein is 1,4-alpha-glucan branching enzyme GlgB.